The sequence spans 131 residues: Profilin-2 (131 aa).

This sequence belongs to the profilin family. In terms of assembly, occurs in many kinds of cells as a complex with monomeric actin in a 1:1 ratio.

Its subcellular location is the cytoplasm. The protein resides in the cytoskeleton. Binds to actin and affects the structure of the cytoskeleton. At high concentrations, profilin prevents the polymerization of actin, whereas it enhances it at low concentrations. By binding to PIP2, it inhibits the formation of IP3 and DG. The chain is Profilin-2 (PRO2) from Triticum aestivum (Wheat).